Reading from the N-terminus, the 662-residue chain is Glutathione hydrolase 7 (662 aa).

Residues 1–106 (MAAENEASQE…AAECSCRQDG (106 aa)) are Cytoplasmic-facing. Phosphoserine is present on residues Ser-17, Ser-72, Ser-79, and Ser-83. The segment at 26–90 (SFPRLPEDEP…DGSPLRETRK (65 aa)) is disordered. Over residues 72–83 (SSSSEMGSQDGS) the composition is skewed to low complexity. The helical; Signal-anchor for type II membrane protein transmembrane segment at 107 to 127 (LTVIVTACLTFATGVTVALVM) threads the bilayer. Residues 128–662 (QIYFGDPQIF…SPDAAGATIL (535 aa)) lie on the Extracellular side of the membrane. N-linked (GlcNAc...) asparagine glycans are attached at residues Asn-198, Asn-267, Asn-283, Asn-330, Asn-353, Asn-394, Asn-519, Asn-523, and Asn-586.

This sequence belongs to the gamma-glutamyltransferase family. As to quaternary structure, heterodimer composed of the light and heavy chains. The active site is located in the light chain. In terms of processing, cleaved by autocatalysis into a large and a small subunit and the autocatalytic cleavage is essential to the functional activation of the enzyme.

The protein localises to the membrane. It catalyses the reaction an N-terminal (5-L-glutamyl)-[peptide] + an alpha-amino acid = 5-L-glutamyl amino acid + an N-terminal L-alpha-aminoacyl-[peptide]. The enzyme catalyses glutathione + H2O = L-cysteinylglycine + L-glutamate. The catalysed reaction is an S-substituted glutathione + H2O = an S-substituted L-cysteinylglycine + L-glutamate. Its pathway is sulfur metabolism; glutathione metabolism. In terms of biological role, hydrolyzes and transfers gamma-glutamyl moieties from glutathione and other gamma-glutamyl compounds to acceptors. The protein is Glutathione hydrolase 7 of Mus musculus (Mouse).